The primary structure comprises 403 residues: Argininosuccinate synthase (403 aa).

ATP-binding positions include 10-18 (AYSGGVDTS) and Ala38. Tyr89 lines the L-citrulline pocket. Gly119 is a binding site for ATP. Positions 121, 125, and 126 each coordinate L-aspartate. Position 125 (Asn125) interacts with L-citrulline. Arg129, Ser177, Ser186, Glu262, and Tyr274 together coordinate L-citrulline.

The protein belongs to the argininosuccinate synthase family. Type 1 subfamily. As to quaternary structure, homotetramer.

Its subcellular location is the cytoplasm. It catalyses the reaction L-citrulline + L-aspartate + ATP = 2-(N(omega)-L-arginino)succinate + AMP + diphosphate + H(+). Its pathway is amino-acid biosynthesis; L-arginine biosynthesis; L-arginine from L-ornithine and carbamoyl phosphate: step 2/3. This chain is Argininosuccinate synthase, found in Parasynechococcus marenigrum (strain WH8102).